The sequence spans 692 residues: Ino eighty subunit 1 (692 aa).

A compositionally biased stretch (basic and acidic residues) spans 1-25 (MGKRVYDPIHDTFQLREDNSDETKA). The segment at 1–133 (MGKRVYDPIH…RHLKKPDGEP (133 aa)) is disordered. Ser-27 bears the Phosphoserine mark. The span at 28–56 (PMQSVKSGSQEEASPSSIQSETETVTTKS) shows a compositional bias: polar residues. Residues 64–80 (EIDDKNDDDSTQSEEEN) are compositionally biased toward acidic residues. Over residues 97–109 (GASTATGPVTTNT) the composition is skewed to polar residues. Residues 340–385 (SKYVEVESKAQEQDMVDEQNEVKETEAENEKQESKAAYATTLFDIL) adopt a coiled-coil conformation. The span at 465–485 (FMSKMEEGRKRERTNVTEVKK) shows a compositional bias: basic and acidic residues. A disordered region spans residues 465–550 (FMSKMEEGRK…VTPAAPTETE (86 aa)). A phosphoserine mark is found at Ser-487, Ser-493, and Ser-504. A compositionally biased stretch (acidic residues) spans 493 to 504 (SEEDGEGEDDKS). At Thr-507 the chain carries Phosphothreonine. Residues 513–528 (SLLTPTPILESSSPMT) show a composition bias toward polar residues.

As to quaternary structure, component of the chromatin-remodeling INO80 complex, at least composed of ARP4, ARP5, ARP8, RVB1, RVB2, TAF14, NHP10, IES1, IES3, IES4, IES6, ACT1, IES2, IES5 and INO80.

The protein resides in the nucleus. Probably involved in transcription regulation via its interaction with the INO80 complex, a chromatin-remodeling complex. In Saccharomyces cerevisiae (strain ATCC 204508 / S288c) (Baker's yeast), this protein is Ino eighty subunit 1 (IES1).